The chain runs to 200 residues: Dephospho-CoA kinase (200 aa).

A DPCK domain is found at T4–K200. A12–T17 contributes to the ATP binding site.

The protein belongs to the CoaE family.

It localises to the cytoplasm. The catalysed reaction is 3'-dephospho-CoA + ATP = ADP + CoA + H(+). It functions in the pathway cofactor biosynthesis; coenzyme A biosynthesis; CoA from (R)-pantothenate: step 5/5. Functionally, catalyzes the phosphorylation of the 3'-hydroxyl group of dephosphocoenzyme A to form coenzyme A. The chain is Dephospho-CoA kinase from Listeria monocytogenes serovar 1/2a (strain ATCC BAA-679 / EGD-e).